A 134-amino-acid polypeptide reads, in one-letter code: Profilin-2 (134 aa).

Cys-13 and Cys-118 are joined by a disulfide. Positions 84–100 (AVIRGKKGSGGITIKKT) match the Involved in PIP2 interaction motif. Thr-114 carries the phosphothreonine modification.

It belongs to the profilin family. In terms of assembly, occurs in many kinds of cells as a complex with monomeric actin in a 1:1 ratio. Phosphorylated by MAP kinases.

The protein resides in the cytoplasm. Its subcellular location is the cytoskeleton. Its function is as follows. Binds to actin and affects the structure of the cytoskeleton. At high concentrations, profilin prevents the polymerization of actin, whereas it enhances it at low concentrations. The sequence is that of Profilin-2 from Olea europaea (Common olive).